The sequence spans 607 residues: Elongation factor 4 (607 aa).

The tr-type G domain occupies 11–193 (GKIRNFSIIA…QIVEKVPAPT (183 aa)). Residues 23 to 28 (DHGKST) and 140 to 143 (NKID) contribute to the GTP site.

It belongs to the TRAFAC class translation factor GTPase superfamily. Classic translation factor GTPase family. LepA subfamily.

Its subcellular location is the cell membrane. The catalysed reaction is GTP + H2O = GDP + phosphate + H(+). Functionally, required for accurate and efficient protein synthesis under certain stress conditions. May act as a fidelity factor of the translation reaction, by catalyzing a one-codon backward translocation of tRNAs on improperly translocated ribosomes. Back-translocation proceeds from a post-translocation (POST) complex to a pre-translocation (PRE) complex, thus giving elongation factor G a second chance to translocate the tRNAs correctly. Binds to ribosomes in a GTP-dependent manner. The sequence is that of Elongation factor 4 from Streptococcus pneumoniae (strain JJA).